A 354-amino-acid chain; its full sequence is MNECHYDKRMDFFYNRSNTDTADEWTGTKLVIVLCVGTFFCLFIFFSNSLVIAAVITNRKFHFPFYYLLANLAAADFFAGIAYVFLMFNTGPVSKTLTVNRWLLRQGLLDTSLTASLANLLVIAVERHMSIMRMRIHSNLTKKRVTLLILLVWAIAIFMGAVPTLGWNCLCNISACSSLAPIYSRSYLIFWTVSNLLAFFIMVVVYVRIYMYVKRKTNVLSPHTSGSISRRRAPMKLMKTVMTVLGAFVVCWTPGLVVLLLDGLNCKQCNVQHVKRWFLLLALLNSVMNPIIYSYKDEDMYNTMRKMICCAPHDSNAERHPSRIPSTIHSRSDTGSQYLEDSISQGQVCNKSSS.

The Extracellular portion of the chain corresponds to 1–31 (MNECHYDKRMDFFYNRSNTDTADEWTGTKLV). Asparagine 15 carries an N-linked (GlcNAc...) asparagine glycan. The helical transmembrane segment at 32–52 (IVLCVGTFFCLFIFFSNSLVI) threads the bilayer. Over 53 to 67 (AAVITNRKFHFPFYY) the chain is Cytoplasmic. The chain crosses the membrane as a helical span at residues 68–88 (LLANLAAADFFAGIAYVFLMF). The Extracellular segment spans residues 89–101 (NTGPVSKTLTVNR). A helical transmembrane segment spans residues 102 to 124 (WLLRQGLLDTSLTASLANLLVIA). Topologically, residues 125–146 (VERHMSIMRMRIHSNLTKKRVT) are cytoplasmic. Residues 147-167 (LLILLVWAIAIFMGAVPTLGW) form a helical membrane-spanning segment. Residues 168–186 (NCLCNISACSSLAPIYSRS) lie on the Extracellular side of the membrane. Asparagine 172 carries an N-linked (GlcNAc...) asparagine glycan. Residues 187 to 207 (YLIFWTVSNLLAFFIMVVVYV) traverse the membrane as a helical segment. Residues 208-240 (RIYMYVKRKTNVLSPHTSGSISRRRAPMKLMKT) are Cytoplasmic-facing. The helical transmembrane segment at 241-261 (VMTVLGAFVVCWTPGLVVLLL) threads the bilayer. Residues 262 to 276 (DGLNCKQCNVQHVKR) are Extracellular-facing. A helical transmembrane segment spans residues 277 to 295 (WFLLLALLNSVMNPIIYSY). Residues 296-354 (KDEDMYNTMRKMICCAPHDSNAERHPSRIPSTIHSRSDTGSQYLEDSISQGQVCNKSSS) lie on the Cytoplasmic side of the membrane. Cysteine 309 carries the S-palmitoyl cysteine lipid modification.

This sequence belongs to the G-protein coupled receptor 1 family.

The protein localises to the cell membrane. Functionally, receptor for lysophosphatidic acid (LPA), a mediator of diverse cellular activities. Seems to be coupled to the G(i)/G(o) and G(q) families of heteromeric G proteins. The sequence is that of Lysophosphatidic acid receptor 3 (Lpar3) from Rattus norvegicus (Rat).